The chain runs to 1915 residues: Ankyrin repeat domain-containing protein 36A (1915 aa).

ANK repeat units follow at residues 31–60 (YHLK…DANK), 64–93 (KERT…ELNL), 97–126 (EDRT…NPNI), 130–159 (FGRT…NIEE), 163–192 (CEYQ…NVNA), and 196–225 (LGRS…DVLS). Disordered regions lie at residues 261–331 (PINS…DEQK), 470–619 (ATGQ…QKQS), 639–663 (MGGG…DKTD), 676–1203 (LQCG…KATS), and 1285–1304 (KDVQ…SEGE). Polar residues-rich tracts occupy residues 262–272 (INSNPVSSQKQ) and 297–306 (KSGTVSSQKQ). The span at 505-521 (SLTSSEESSERPPLSTL) shows a compositional bias: low complexity. Composition is skewed to basic and acidic residues over residues 551–562 (PAEKATSDDKDS) and 585–596 (PAEKATSDEKDS). Polar residues-rich tracts occupy residues 597–619 (VSNI…QKQS) and 645–657 (GTVS…ASKA). Basic and acidic residues-rich tracts occupy residues 806–815 (RENKDGEKSR), 874–883 (RENKDGEKSR), 931–951 (SDEK…EISR), 976–985 (RENKDGEKSR), 1044–1053 (RENKDGEKSR), 1100–1121 (TSDE…EKSR), and 1134–1152 (ICDK…KDEQ). A compositionally biased stretch (polar residues) spans 1175-1196 (VSNIPTEIKDGQQSGTVSSQKQ). 4 coiled-coil regions span residues 1383–1466 (IKLK…TEEQ), 1504–1531 (KEDL…IKNQ), 1573–1614 (LAAL…ARCD), and 1727–1814 (NMLL…KRDD). Positions 1489–1508 (KTGGNNSNQVSETDEKEDLL) are disordered.

This sequence belongs to the ANKRD36 family.

In Homo sapiens (Human), this protein is Ankyrin repeat domain-containing protein 36A (ANKRD36).